Here is a 234-residue protein sequence, read N- to C-terminus: Phosphoribosylaminoimidazole-succinocarboxamide synthase (234 aa).

It belongs to the SAICAR synthetase family.

It catalyses the reaction 5-amino-1-(5-phospho-D-ribosyl)imidazole-4-carboxylate + L-aspartate + ATP = (2S)-2-[5-amino-1-(5-phospho-beta-D-ribosyl)imidazole-4-carboxamido]succinate + ADP + phosphate + 2 H(+). It participates in purine metabolism; IMP biosynthesis via de novo pathway; 5-amino-1-(5-phospho-D-ribosyl)imidazole-4-carboxamide from 5-amino-1-(5-phospho-D-ribosyl)imidazole-4-carboxylate: step 1/2. This Streptococcus agalactiae serotype III (strain NEM316) protein is Phosphoribosylaminoimidazole-succinocarboxamide synthase.